Reading from the N-terminus, the 242-residue chain is Stress response regulator protein 1 (242 aa).

Residues 118–236 (NFLLVDDNFI…FDHIITCIEK (119 aa)) form the Response regulatory domain. 4-aspartylphosphate is present on Asp-169.

Its function is as follows. Required for stress adaptation, morphogenesis and virulence. This is Stress response regulator protein 1 (SRR1) from Debaryomyces hansenii (strain ATCC 36239 / CBS 767 / BCRC 21394 / JCM 1990 / NBRC 0083 / IGC 2968) (Yeast).